A 298-amino-acid polypeptide reads, in one-letter code: ADP-ribosyl cyclase/cyclic ADP-ribose hydrolase 1 (298 aa).

Residues 1–21 lie on the Cytoplasmic side of the membrane; sequence MPDYEFSPASGDRPRSWISKQ. A helical; Signal-anchor for type II membrane protein membrane pass occupies residues 22 to 42; it reads VLIVLGVCLPVILALAIWVGV. The Extracellular segment spans residues 43–298; it reads LTWRQSSMGA…PEHPSCSVLM (256 aa). Intrachain disulfides connect Cys64–Cys80, Cys97–Cys178, and Cys158–Cys171. Asn98 is a glycosylation site (N-linked (GlcNAc...) asparagine). The active site involves Cys117. Asn118 carries N-linked (GlcNAc...) asparagine glycosylation. N-linked (GlcNAc...) asparagine glycosylation is present at Asn177. The active site involves Cys199. N-linked (GlcNAc...) asparagine glycosylation is found at Asn207 and Asn268. 2 disulfides stabilise this stretch: Cys252–Cys273 and Cys285–Cys294.

Belongs to the ADP-ribosyl cyclase family. In terms of assembly, homodimer. In terms of tissue distribution, osteoclasts.

It is found in the cell membrane. The protein resides in the microsome membrane. Its subcellular location is the endoplasmic reticulum membrane. It carries out the reaction NAD(+) = cyclic ADP-beta-D-ribose + nicotinamide + H(+). The catalysed reaction is 2'-phospho-cyclic ADP-ribose + nicotinate = nicotinate-adenine dinucleotide phosphate. The enzyme catalyses NAD(+) + H2O = ADP-D-ribose + nicotinamide + H(+). It catalyses the reaction nicotinate + NADP(+) = nicotinate-adenine dinucleotide phosphate + nicotinamide. Its function is as follows. Synthesizes cyclic ADP-ribose (cADPR), a second messenger for glucose-induced insulin secretion. Synthesizes the Ca(2+) mobilizer nicotinate-adenine dinucleotide phosphate, NAADP(+), from 2'-phospho-cADPR and nicotinic acid, as well as from NADP(+) and nicotinic acid. Also has cADPR hydrolase activity. The sequence is that of ADP-ribosyl cyclase/cyclic ADP-ribose hydrolase 1 (CD38) from Oryctolagus cuniculus (Rabbit).